A 171-amino-acid polypeptide reads, in one-letter code: Ly6/PLAUR domain-containing protein 6 (171 aa).

The N-terminal stretch at 1–25 (MEPSPALAWLLLLSLVADCLKAAQS) is a signal peptide. In terms of domain architecture, UPAR/Ly6 spans 47–141 (FKCFTCEKAA…PRNDTDATFA (95 aa)). 6 cysteine pairs are disulfide-bonded: cysteine 49/cysteine 77, cysteine 52/cysteine 61, cysteine 70/cysteine 96, cysteine 102/cysteine 121, cysteine 107/cysteine 118, and cysteine 122/cysteine 127. A NxI motif motif is present at residues 88 to 90 (NSI). N-linked (GlcNAc...) asparagine glycans are attached at residues asparagine 134 and asparagine 147. Asparagine 147 carries GPI-anchor amidated asparagine lipidation. Positions 148–171 (QTNGHPHCVSVIVSCLWVWLGLTL) are cleaved as a propeptide — removed in mature form.

As to quaternary structure, interacts with nicotinic acetylcholine receptors (nAChRs) including CHRNA3, CHRNA4, CHRNA5, CHRNA6, CHRNA7, CHRNB2 and CHRNB4. Interacts (via NxI motif) with LRP6. As to expression, expressed at high levels in the cortex and cerebellum of the brain, at moderate levels in the lung, kidney, and liver, and at low levels in the heart and prostate (at protein level). Expressed in neurons (at protein level).

The protein localises to the secreted. Its subcellular location is the cytoplasm. It localises to the cell membrane. The protein resides in the synapse. It is found in the synaptosome. The protein localises to the membrane raft. Its subcellular location is the cell projection. It localises to the dendrite. The protein resides in the perikaryon. Its function is as follows. Acts as a modulator of nicotinic acetylcholine receptors (nAChRs) function in the brain. Inhibits nicotine-induced Ca(2+) influx through nAChRs. In vitro, specifically inhibits alpha-3:beta-4 and alpha-7 nAChR currents in an allosteric manner. Acts as a positive regulator of Wnt/beta-catenin signaling. This is Ly6/PLAUR domain-containing protein 6 (Lypd6) from Rattus norvegicus (Rat).